Here is a 376-residue protein sequence, read N- to C-terminus: Small ribosomal subunit protein uS11m (376 aa).

The protein belongs to the universal ribosomal protein uS11 family. In terms of assembly, component of the mitochondrial small ribosomal subunit (mt-SSU). Mature N.crassa 74S mitochondrial ribosomes consist of a small (37S) and a large (54S) subunit. The 37S small subunit contains a 16S ribosomal RNA (16S mt-rRNA) and 32 different proteins. The 54S large subunit contains a 23S rRNA (23S mt-rRNA) and 42 different proteins.

It is found in the mitochondrion. In terms of biological role, component of the mitochondrial ribosome (mitoribosome), a dedicated translation machinery responsible for the synthesis of mitochondrial genome-encoded proteins, including at least some of the essential transmembrane subunits of the mitochondrial respiratory chain. The mitoribosomes are attached to the mitochondrial inner membrane and translation products are cotranslationally integrated into the membrane. The chain is Small ribosomal subunit protein uS11m (mrps18) from Neurospora crassa (strain ATCC 24698 / 74-OR23-1A / CBS 708.71 / DSM 1257 / FGSC 987).